Reading from the N-terminus, the 437-residue chain is Trigger factor (437 aa).

A PPIase FKBP-type domain is found at 161-246; sequence DDQVNIDFVG…VNSVSAPVLP (86 aa).

The protein belongs to the FKBP-type PPIase family. Tig subfamily.

Its subcellular location is the cytoplasm. It carries out the reaction [protein]-peptidylproline (omega=180) = [protein]-peptidylproline (omega=0). Functionally, involved in protein export. Acts as a chaperone by maintaining the newly synthesized protein in an open conformation. Functions as a peptidyl-prolyl cis-trans isomerase. The polypeptide is Trigger factor (Pseudomonas putida (strain ATCC 47054 / DSM 6125 / CFBP 8728 / NCIMB 11950 / KT2440)).